A 678-amino-acid chain; its full sequence is UvrABC system protein C (678 aa).

The region spanning 16-95 is the GIY-YIG domain; the sequence is VEPGVYRFRD…IKEFDPRFNI (80 aa). The UVR domain occupies 208-243; it reads DRLIREMEQQMNAAAEELDFERAARLRDNIGAMRRA. Residues 477-508 form a disordered region; sequence HLRDAEAAPEGRPEQGPRASARPEQGPRASAR. The span at 479-491 shows a compositional bias: basic and acidic residues; sequence RDAEAAPEGRPEQ.

The protein belongs to the UvrC family. As to quaternary structure, interacts with UvrB in an incision complex.

It is found in the cytoplasm. Its function is as follows. The UvrABC repair system catalyzes the recognition and processing of DNA lesions. UvrC both incises the 5' and 3' sides of the lesion. The N-terminal half is responsible for the 3' incision and the C-terminal half is responsible for the 5' incision. The protein is UvrABC system protein C of Mycolicibacterium vanbaalenii (strain DSM 7251 / JCM 13017 / BCRC 16820 / KCTC 9966 / NRRL B-24157 / PYR-1) (Mycobacterium vanbaalenii).